Here is a 306-residue protein sequence, read N- to C-terminus: Curved DNA-binding protein (306 aa).

The J domain occupies 5 to 69 (DYYAIMGVKP…QRRAEYDQMW (65 aa)).

The protein resides in the cytoplasm. Its subcellular location is the nucleoid. In terms of biological role, DNA-binding protein that preferentially recognizes a curved DNA sequence. It is probably a functional analog of DnaJ; displays overlapping activities with DnaJ, but functions under different conditions, probably acting as a molecular chaperone in an adaptive response to environmental stresses other than heat shock. Lacks autonomous chaperone activity; binds native substrates and targets them for recognition by DnaK. Its activity is inhibited by the binding of CbpM. The chain is Curved DNA-binding protein from Escherichia coli (strain SMS-3-5 / SECEC).